Consider the following 256-residue polypeptide: MAAAAAGDSDSWDADTFSVEDPVRKVGGGGTAGGDRWEGEDEDEDVKDNWDDDDDEKKEEAEVKPEVKISEKKKIAEKIKEKERQQKKRQEEIKKRLEEPEEPKVLTPEEQLADKLRLKKLQEESDLELAKETFGVNNTVYGIDAMNPSSRDDFTEFGKLLKDKITQYEKSLYYANFLEALVRDVCISLEIDDLKKITNSLTVLCSEKQKQEKQSKAKKKKKGVVPGGGLKATMKDDLADYGGYDGGYAQDYEDFM.

Residues 1-67 (MAAAAAGDSD…KEEAEVKPEV (67 aa)) are sufficient for interaction with EIF3B. Residues 1–106 (MAAAAAGDSD…LEEPEEPKVL (106 aa)) form a disordered region. Phosphoserine occurs at positions 9, 11, and 18. Positions 38–57 (EGEDEDEDVKDNWDDDDDEK) are enriched in acidic residues. Residues 58-104 (KEEAEVKPEVKISEKKKIAEKIKEKERQQKKRQEEIKKRLEEPEEPK) are compositionally biased toward basic and acidic residues. The stretch at 68–133 (KISEKKKIAE…ESDLELAKET (66 aa)) forms a coiled coil. A Glycyl lysine isopeptide (Lys-Gly) (interchain with G-Cter in SUMO2) cross-link involves residue Lys104. Thr107 carries the phosphothreonine modification. Ser125 is modified (phosphoserine). The interval 214-243 (QSKAKKKKKGVVPGGGLKATMKDDLADYGG) is disordered. The interval 241–256 (YGGYDGGYAQDYEDFM) is promotes stable association with the 40S ribosome. Position 252 is a phosphotyrosine (Tyr252).

It belongs to the eIF-3 subunit J family. As to quaternary structure, component of the eukaryotic translation initiation factor 3 (eIF-3) complex, which is composed of 13 subunits: EIF3A, EIF3B, EIF3C, EIF3D, EIF3E, EIF3F, EIF3G, EIF3H, EIF3I, EIF3J, EIF3K, EIF3L and EIF3M. The eIF-3 complex appears to include 3 stable modules: module A is composed of EIF3A, EIF3B, EIF3G and EIF3I; module B is composed of EIF3F, EIF3H, and EIF3M; and module C is composed of EIF3C, EIF3D, EIF3E, EIF3K and EIF3L. EIF3C of module C binds EIF3B of module A and EIF3H of module B, thereby linking the three modules. EIF3J is a labile subunit that binds to the eIF-3 complex via EIF3B. The eIF-3 complex interacts with RPS6KB1 under conditions of nutrient depletion. Mitogenic stimulation leads to binding and activation of a complex composed of MTOR and RPTOR, leading to phosphorylation and release of RPS6KB1 and binding of EIF4B to eIF-3. In terms of processing, phosphorylated. Phosphorylation is enhanced upon serum stimulation.

The protein resides in the cytoplasm. Its function is as follows. Component of the eukaryotic translation initiation factor 3 (eIF-3) complex, which is required for several steps in the initiation of protein synthesis. The eIF-3 complex associates with the 40S ribosome and facilitates the recruitment of eIF-1, eIF-1A, eIF-2:GTP:methionyl-tRNAi and eIF-5 to form the 43S pre-initiation complex (43S PIC). The eIF-3 complex stimulates mRNA recruitment to the 43S PIC and scanning of the mRNA for AUG recognition. The eIF-3 complex is also required for disassembly and recycling of post-termination ribosomal complexes and subsequently prevents premature joining of the 40S and 60S ribosomal subunits prior to initiation. The eIF-3 complex specifically targets and initiates translation of a subset of mRNAs involved in cell proliferation, including cell cycling, differentiation and apoptosis, and uses different modes of RNA stem-loop binding to exert either translational activation or repression. This subunit binds directly within the mRNA entry channel of the 40S ribosome to the aminoacyl (A) site. It may regulate the interaction between the 43S PIC and mRNA. This chain is Eukaryotic translation initiation factor 3 subunit J, found in Bos taurus (Bovine).